The primary structure comprises 485 residues: Beta-amyrin 28-monooxygenase CYP716A378 (485 aa).

Residues 3–23 (LFFICGLVLFSTLSLISLFLL) traverse the membrane as a helical; Signal-anchor for type II membrane protein segment. 2 N-linked (GlcNAc...) asparagine glycosylation sites follow: N25 and N386. Heme is bound at residue C426.

Belongs to the cytochrome P450 family. The cofactor is heme. In terms of tissue distribution, mainly expressed in flowers and flower buds, to a lesser extent in young leaves and, at low levels, in old leaves, stems and roots.

The protein localises to the membrane. It carries out the reaction beta-amyrin + 3 reduced [NADPH--hemoprotein reductase] + 3 O2 = oleanolate + 3 oxidized [NADPH--hemoprotein reductase] + 4 H2O + 4 H(+). The protein operates within secondary metabolite biosynthesis; terpenoid biosynthesis. In terms of biological role, component of the oleanane-type triterpene saponins (e.g. saponarioside A and saponarioside B) biosynthetic pathway, leading to the production of natural products with detergent properties used as traditional sources of soap. An oxidoreductase that facilitates the oxidation of the methyl group to a carboxyl group at the C-28 position of beta-amyrin, resulting in the formation of oleanolate. The chain is Beta-amyrin 28-monooxygenase CYP716A378 from Saponaria officinalis (Common soapwort).